A 572-amino-acid polypeptide reads, in one-letter code: Urocanate hydratase (572 aa).

Residues 48–49 (GG), glutamine 126, 172–174 (GMG), aspartate 192, 238–239 (NA), 259–263 (QTSAH), 268–269 (YL), and tyrosine 317 contribute to the NAD(+) site. The active site involves cysteine 405. Glycine 487 lines the NAD(+) pocket. Basic and acidic residues predominate over residues 550 to 559 (EGDEAHEGDA). Residues 550–572 (EGDEAHEGDAAHGSGAAREGDGV) form a disordered region.

This sequence belongs to the urocanase family. It depends on NAD(+) as a cofactor.

The protein resides in the cytoplasm. It catalyses the reaction 4-imidazolone-5-propanoate = trans-urocanate + H2O. It participates in amino-acid degradation; L-histidine degradation into L-glutamate; N-formimidoyl-L-glutamate from L-histidine: step 2/3. In terms of biological role, catalyzes the conversion of urocanate to 4-imidazolone-5-propionate. The polypeptide is Urocanate hydratase (Streptomyces coelicolor (strain ATCC BAA-471 / A3(2) / M145)).